Here is a 419-residue protein sequence, read N- to C-terminus: uncharacterized protein (419 aa).

Transmembrane regions (helical) follow at residues 15-35 (RVLM…MPYL), 36-56 (ADYL…VMGV), 77-99 (YKPL…VVAQ), 104-126 (VLIA…RGYL), 140-160 (MFNV…LVLL), 166-186 (ITVL…LVAL), 213-233 (FLTL…IYLA), 246-266 (QYLL…GGQL), 282-302 (LVVG…IPNG), 309-329 (VAVM…AALF), 351-371 (FYST…GSLM), and 377-397 (LNTD…AVAG).

This sequence belongs to the major facilitator superfamily.

It localises to the cell membrane. This is an uncharacterized protein from Mycobacterium tuberculosis (strain CDC 1551 / Oshkosh).